Reading from the N-terminus, the 318-residue chain is NADH-ubiquinone oxidoreductase chain 1 (318 aa).

The next 8 membrane-spanning stretches (helical) occupy residues 2 to 22 (FMINLLMMIVPILLAVAFLTL), 68 to 88 (ISMFIMAPILALTLALTMWTP), 100 to 120 (LGILFMLAMSSLAVYSILWSG), 146 to 166 (LAIILLSVLLLSGSFTLPTLI), 171 to 191 (HIWLIVPSWPLAMMWFISTLA), 222 to 242 (LFFLAEYANIIMMNIFTTILF), 253 to 273 (ELYTINFVTKSMLLTISFLWV), and 293 to 313 (FLPLTLALCMWHVTMPIITAG).

It belongs to the complex I subunit 1 family. In terms of assembly, core subunit of respiratory chain NADH dehydrogenase (Complex I) which is composed of 45 different subunits.

Its subcellular location is the mitochondrion inner membrane. It carries out the reaction a ubiquinone + NADH + 5 H(+)(in) = a ubiquinol + NAD(+) + 4 H(+)(out). Core subunit of the mitochondrial membrane respiratory chain NADH dehydrogenase (Complex I) which catalyzes electron transfer from NADH through the respiratory chain, using ubiquinone as an electron acceptor. Essential for the catalytic activity and assembly of complex I. The chain is NADH-ubiquinone oxidoreductase chain 1 (MT-ND1) from Hipposideros armiger terasensis (Formosan leaf-nosed bat).